The following is a 928-amino-acid chain: Arf guanine nucleotide exchange factor sec74 (928 aa).

2 stretches are compositionally biased toward polar residues: residues 1–12 (MDESSRIASSSA) and 57–83 (TITSDTPKVSSQHSPVSSAYTGDSTTD). Disordered stretches follow at residues 1–152 (MDES…RPSS) and 227–249 (SLSSNFSARTPASNQSSVSEDFG). Ser-67 carries the post-translational modification Phosphoserine. Composition is skewed to low complexity over residues 89–102 (GHSSSQKLSNKVSS) and 115–132 (SKSSSSQCSSPFLPTSSS). Residues 228-420 (LSSNFSARTP…ECFYDNITYT (193 aa)) form the SEC7 domain. A compositionally biased stretch (polar residues) spans 234 to 245 (ARTPASNQSSVS). A PH domain is found at 548–677 (KVFKLGILIQ…WLVKINFVST (130 aa)).

The protein localises to the cytoplasm. The protein resides in the cell tip. Functionally, guanine nucleotide exchange factor for Arf GTPases, stimulating the nucleotide exchange from the GDP-bound to the GTP-bound form. Involved in vesicular transport. This chain is Arf guanine nucleotide exchange factor sec74 (sec74), found in Schizosaccharomyces pombe (strain 972 / ATCC 24843) (Fission yeast).